The following is a 209-amino-acid chain: Large ribosomal subunit protein uL3 (209 aa).

Gln-150 is subject to N5-methylglutamine.

This sequence belongs to the universal ribosomal protein uL3 family. Part of the 50S ribosomal subunit. Forms a cluster with proteins L14 and L19. Methylated by PrmB.

In terms of biological role, one of the primary rRNA binding proteins, it binds directly near the 3'-end of the 23S rRNA, where it nucleates assembly of the 50S subunit. This chain is Large ribosomal subunit protein uL3, found in Aliivibrio salmonicida (strain LFI1238) (Vibrio salmonicida (strain LFI1238)).